Consider the following 404-residue polypeptide: MDSLRLRPSLLAARAPGAASLPPLRRDHFLPPLCSIHRNGKRPVSLSSQRTQGPSFDQCQKFFGWKSSHHRIPHRPTSSSADASGQPLQSSAEAHDSSSIWKPISSSLDAFYRFSRPHTVIGTALSIVSVSLLAVENLSDVSPLFLTGLLEAVVAALFMNIYIVGLNQLFDIEIDKVNKPTLPLASGEYSPATGVALVSAFAAMSFGLGWAVGSQPLFLALFISFILGTAYSINLPFLRWKRSAVVAALCILAVRAVIVQLAFFLHIQTFVFRRPAVFTRPLIFATAFMTFFSVVIALFKDIPDIEGDRIFGIKSFSVRLGQKKVFWICVGLLEMAYCVAILMGATSACLWSKYATVVGHAILAAILWNRSRSIDLTSKTAITSFYMFIWKLFYAEYLLIPLVR.

Residues Met1 to Thr77 constitute a chloroplast transit peptide. Residues Ser68–Asp96 form a disordered region. The segment covering Pro76–Ala92 has biased composition (polar residues). 9 helical membrane passes run Thr119–Ser139, Leu144–Val164, Leu184–Met204, Pro216–Leu238, Val245–Leu265, Leu282–Ile302, Val325–Ala345, Ala348–Trp368, and Ile382–Leu402.

Belongs to the UbiA prenyltransferase family.

The protein localises to the plastid. Its subcellular location is the chloroplast thylakoid membrane. The enzyme catalyses phytyl diphosphate + homogentisate + H(+) = 2-methyl-6-phytyl-1,4-benzene-1,4-diol + CO2 + diphosphate. It participates in cofactor biosynthesis; tocopherol biosynthesis. In terms of biological role, involved in the synthesis of tocopherol (vitamin E). Catalyzes the condensation of homogentisate and phytyl diphosphate to form dimethylphytylhydroquinone. This Oryza sativa subsp. japonica (Rice) protein is Probable homogentisate phytyltransferase 1, chloroplastic (HPT1).